The primary structure comprises 837 residues: Semaphorin-4G (837 aa).

The signal sequence occupies residues 1 to 17 (MWGRLWPLLFSFLTVTA). Topologically, residues 18-673 (VPGPSLRRPS…GAQLAHDMRM (656 aa)) are extracellular. A Sema domain is found at 35–503 (RLTISYEELS…AASGVLQFPL (469 aa)). 3 N-linked (GlcNAc...) asparagine glycosylation sites follow: N55, N111, and N126. Cysteines 104 and 115 form a disulfide. Cystine bridges form between C133–C142, C268–C375, and C292–C335. N-linked (GlcNAc...) asparagine glycosylation is present at N386. In terms of domain architecture, PSI spans 505–556 (SCSRYQSCYDCILARDPYCGWDSSIHACMVATTVANRTELIQDIERGNRGCE). 2 cysteine pairs are disulfide-bonded: C506–C523 and C515–C532. N-linked (GlcNAc...) asparagine glycosylation is found at N540 and N596. The region spanning 565 to 647 (PPLKTRSVLR…RMLLASYSLT (83 aa)) is the Ig-like C2-type domain. C582 and C630 are disulfide-bonded. The chain crosses the membrane as a helical span at residues 674–694 (FYVVAIAILGGLCLILASSLL). Residues 695–837 (YVACLKGGRR…LVEQLDESSV (143 aa)) are Cytoplasmic-facing. Positions 721-776 (SAVQLQTVSGQCPGEEDEGDDGEGTGGLESGCLQIIPGEGAPAPPPPPPPPPPAEL) are disordered. The segment covering 734-743 (GEEDEGDDGE) has biased composition (acidic residues). The span at 762-774 (PAPPPPPPPPPPA) shows a compositional bias: pro residues. Phosphoserine is present on residues S794 and S836.

It belongs to the semaphorin family. Interacts with PLXNB2. As to expression, brain, spinal cord, and several sensory organs as well as specific populations of projection neurons.

Its subcellular location is the cell membrane. Its function is as follows. Cell surface receptor for PLXNB2. May play a role in axon guidance. This chain is Semaphorin-4G (Sema4g), found in Mus musculus (Mouse).